The chain runs to 278 residues: Undecaprenyl-diphosphatase 1 (278 aa).

The next 7 membrane-spanning stretches (helical) occupy residues 46-66 (VVGF…VYFF), 91-111 (YTFT…GLAA), 119-139 (LASL…MWFA), 153-173 (SLPD…FPGF), 191-211 (VAAT…AGLY), 225-245 (PLAV…AWLL), and 256-276 (FIIY…GGAI).

This sequence belongs to the UppP family.

The protein localises to the cell membrane. It catalyses the reaction di-trans,octa-cis-undecaprenyl diphosphate + H2O = di-trans,octa-cis-undecaprenyl phosphate + phosphate + H(+). Functionally, catalyzes the dephosphorylation of undecaprenyl diphosphate (UPP). Confers resistance to bacitracin. The chain is Undecaprenyl-diphosphatase 1 from Frankia alni (strain DSM 45986 / CECT 9034 / ACN14a).